The primary structure comprises 582 residues: Potassium voltage-gated channel subfamily KQT member 1 (582 aa).

The Cytoplasmic portion of the chain corresponds to 1–31 (RVSIYSARRPLLARTHIQGRVYNFLERPTGW). The chain crosses the membrane as a helical span at residues 32-53 (KCFVYHFAVFLIVLVCLIFSVL). The Extracellular portion of the chain corresponds to 54-64 (STIEQYVALAT). Residues 65-87 (GTLFWMEIVLVVFFGTEYVVRLW) form a helical membrane-spanning segment. Residues 88–103 (SAGCRSKYVGVWGRLR) are Cytoplasmic-facing. A helical membrane pass occupies residues 104 to 129 (FARKPISIIDLIVVLASMVVLCVGSK). The Extracellular segment spans residues 130-137 (GQVFATSA). Residues 138–153 (IRGIRFLQILRMLHVD) traverse the membrane as a helical; Voltage-sensor segment. The segment at 149-157 (MLHVDRQGG) is interaction with KCNE3. The Cytoplasmic segment spans residues 154 to 171 (RQGGTWRLLGSVVFIHRQ). Glutamine 155 contributes to the a 1,2-diacyl-sn-glycero-3-phospho-(1D-myo-inositol-4,5-bisphosphate) binding site. Residues 172–194 (ELITTLYIGFLGLIFSSYFVYLA) traverse the membrane as a helical segment. The Extracellular segment spans residues 195–210 (EKDAVNESGQVEFGSY). N-linked (GlcNAc...) asparagine glycosylation is present at asparagine 200. An intramembrane region (pore-forming) is located at residues 211-231 (ADALWWGVVTVTTIGYGDKVP). Over 232–233 (QT) the chain is Extracellular. The chain crosses the membrane as a helical span at residues 234-259 (WVGKTIASCFSVFAISFFALPAGILG). Over 260 to 582 (SGFALKVQQK…VPRRGPEEGS (323 aa)) the chain is Cytoplasmic. An interaction with CALM region spans residues 281–293 (AAASLIQTAWRCY). Phosphoserine is present on residues serine 318 and serine 320. Positions 426–440 (KVIRRMQYFVAKKKF) are interaction with CALM; calcium-dependent. The segment at 446 to 483 (PYDVRDVIEQYSQGHLNLMVRIKELQRRLDQSIGKPSL) is interaction with KCNE1 C-terminus. The stretch at 496-532 (SNTIGARLNRVEDKVAQLDQRLVLITDMLQQLLSLHH) forms a coiled coil. Residues 499-527 (IGARLNRVEDKVAQLDQRLVLITDMLQQL) are interaction with AKAP9. Residues 500–531 (GARLNRVEDKVAQLDQRLVLITDMLQQLLSLH) are C-terminal assembly domain (tetramerization). The interval 530-582 (LHHGGPPGSRPPSGGGAQVQPCGPTNPELFLPGNALPTYEQLTVPRRGPEEGS) is disordered.

Belongs to the potassium channel family. KQT (TC 1.A.1.15) subfamily. Kv7.1/KCNQ1 sub-subfamily. As to quaternary structure, tetramer. Heterotetramer with KCNE1; targets to the membrane raft. Interacts (via C-terminus) with CALM; forms a heterooctameric structure (with 4:4 KCNQ1:CALM stoichiometry) in a calcium-independent manner. Interacts with AKAP9; targets protein kinase A (PKA) catalytic and regulatory subunits and protein phosphatase 1 (PP1) to the KCNQ1-KCNE1 complex, allowing PKA-mediated phosphorylation and increase of delayed rectifier potassium channel activity. Interacts with KCNE2; form a heterooligomer complex that targets to the membrane raft and leading to currents with an apparently instantaneous activation, a rapid deactivation process and a linear current-voltage relationship and decreases the amplitude of the outward current. Interacts with AP2M1; mediates estrogen-induced internalization via clathrin-coated vesicles. Interacts with NEDD4L; promotes internalization and decreases I(Ks) currents. Interacts with USP2; counteracts the NEDD4L-specific down-regulation of I(Ks) and restore plasma membrane localization. Heterotetramer with KCNQ5; has a voltage-gated potassium channel activity. Interacts with KCNE3; four KCNE3 molecules are bound to one KCNQ1 tetramer (4:4 KCNQ1:KCNE3 stoichiometry); alters membrane raft localization; affects KCNQ1 structure and gating properties. Interacts with KCNE4; impairs KCNQ1 localization in lipid rafts and inhibits voltage-gated potassium channel activity. Interacts with KCNE5; impairs KCNQ1 localization in lipid rafts and only conducts current upon strong and continued depolarization. In terms of processing, phosphorylated by PKA; increases delayed rectifier potassium channel activity of the KCNQ1-KCNE1 complex through a macromolecular complex that includes PKA, PP1, and the targeting protein AKAP9. Post-translationally, ubiquitinated by NEDD4L; promotes internalization. The ubiquitinylated form is internalized through a clathrin-mediated endocytosis by interacting with AP2M1 and is recycled back to the cell membrane via RAB4A and RAB11A. Deubiquitinated by USP2; counteracts the NEDD4L-specific down-regulation of I(Ks) and restores the membrane localization.

Its subcellular location is the cell membrane. It is found in the cytoplasmic vesicle membrane. It localises to the early endosome. The protein localises to the membrane raft. The protein resides in the endoplasmic reticulum. Its subcellular location is the basolateral cell membrane. It catalyses the reaction K(+)(in) = K(+)(out). PIP2 molecule is essential to activate KCNQ channels by inducing the coupling of the voltage-sensing domain (VSD) and the pore-forming domain (PD). Upon channel activation, PIP2 disrupts the VSD-calmodulin/CALM interactions, causing the release of CALM from the VSD which triggers the opening of the gate. Calcium potentiates KCNQ1 channel current through calcium-bound CALM. Calcium-bound CALM competes with PIP2 to stabilize the channel open state. Pore-forming subunit of the voltage-gated potassium (Kv) channel involved in the regulation of cardiomyocyte excitability and important in normal development and functions of myocardium, inner ear, stomach and colon. Associates with KCNE beta subunits that modulates current kinetics. Induces a voltage-dependent by rapidly activating and slowly deactivating potassium-selective outward current. Also promotes a delayed voltage activated potassium current showing outward rectification characteristic. During beta-adrenergic receptor stimulation participates in cardiac repolarization by associating with KCNE1 to form the I(Ks) cardiac potassium current that increases the amplitude and slows down the activation kinetics of outward potassium current I(Ks). Muscarinic agonist oxotremorine-M strongly suppresses KCNQ1/KCNE1 current. When associated with KCNE3, forms the potassium channel that is important for cyclic AMP-stimulated intestinal secretion of chloride ions. This interaction with KCNE3 is reduced by 17beta-estradiol, resulting in the reduction of currents. During conditions of increased substrate load, maintains the driving force for proximal tubular and intestinal sodium ions absorption, gastric acid secretion, and cAMP-induced jejunal chloride ions secretion. Allows the provision of potassium ions to the luminal membrane of the secretory canaliculus in the resting state as well as during stimulated acid secretion. When associated with KCNE2, forms a heterooligomer complex leading to currents with an apparently instantaneous activation, a rapid deactivation process and a linear current-voltage relationship and decreases the amplitude of the outward current. When associated with KCNE4, inhibits voltage-gated potassium channel activity. When associated with KCNE5, this complex only conducts current upon strong and continued depolarization. Also forms a heterotetramer with KCNQ5 that has a voltage-gated potassium channel activity. Binds with phosphatidylinositol 4,5-bisphosphate. This chain is Potassium voltage-gated channel subfamily KQT member 1, found in Felis catus (Cat).